The following is a 329-amino-acid chain: MTLLLGSIVELLGGDLQGDASLKIEGLAPLESATPQQLSFLSHPKYQNQLAASRAACVIVSPEMRGVALARGACIVTEQPYLYFARVTQLWKKSLPRTVRPQIHPSAVIDPEAFVHPRACIGALCVIESGASVGADTVLKSRVTVGENCVIGERCLLHSGVVIGADGFGFAPHAGAWEKIEQLGAVRIGNDVEIGANTCIDRGALQDTVIEDGVKLDNLIQIGHNVHVGKHTAMAGCAGVAGSATIGAHCTLGGGAIVLGHLTLADGVNISAATVVTRSLRKPGHYTGMFPIDDNAAWEKNAASLKQLHSLRDRIRALEDKLMTLRDRP.

Catalysis depends on histidine 224, which acts as the Proton acceptor.

It belongs to the transferase hexapeptide repeat family. LpxD subfamily. As to quaternary structure, homotrimer.

The catalysed reaction is a UDP-3-O-[(3R)-3-hydroxyacyl]-alpha-D-glucosamine + a (3R)-hydroxyacyl-[ACP] = a UDP-2-N,3-O-bis[(3R)-3-hydroxyacyl]-alpha-D-glucosamine + holo-[ACP] + H(+). It participates in bacterial outer membrane biogenesis; LPS lipid A biosynthesis. In terms of biological role, catalyzes the N-acylation of UDP-3-O-acylglucosamine using 3-hydroxyacyl-ACP as the acyl donor. Is involved in the biosynthesis of lipid A, a phosphorylated glycolipid that anchors the lipopolysaccharide to the outer membrane of the cell. This chain is UDP-3-O-acylglucosamine N-acyltransferase, found in Albidiferax ferrireducens (strain ATCC BAA-621 / DSM 15236 / T118) (Rhodoferax ferrireducens).